Consider the following 90-residue polypeptide: Small ribosomal subunit protein uS17m (90 aa).

This sequence belongs to the universal ribosomal protein uS17 family. In terms of assembly, component of the mitochondrial small ribosomal subunit (mt-SSU). Mature yeast 74S mitochondrial ribosomes consist of a small (37S) and a large (54S) subunit. The 37S small subunit contains a 15S ribosomal RNA (15S mt-rRNA) and at least 32 different proteins. The 54S large subunit contains a 21S rRNA (21S mt-rRNA) and at least 45 different proteins.

The protein localises to the mitochondrion. In terms of biological role, component of the mitochondrial ribosome (mitoribosome), a dedicated translation machinery responsible for the synthesis of mitochondrial genome-encoded proteins, including at least some of the essential transmembrane subunits of the mitochondrial respiratory chain. The mitoribosomes are attached to the mitochondrial inner membrane and translation products are cotranslationally integrated into the membrane. uS17m may have a meiosis-specific role as it accumulates during the middle stage of sporulation. This Schizosaccharomyces pombe (strain 972 / ATCC 24843) (Fission yeast) protein is Small ribosomal subunit protein uS17m.